Here is a 480-residue protein sequence, read N- to C-terminus: Carboxy-terminal processing protease CtpB (480 aa).

Positions 1 to 23 are cleaved as a signal peptide; that stretch reads MNQKIMAVIAAGSMLFGGAGVYA. In terms of domain architecture, PDZ spans 92–182; the sequence is SVYMDKQTAK…SSVSMKIQRP (91 aa). The interval 113–116 is peptide binding; it reads GIGA. The Nucleophile role is filled by Ser309. Residues Lys334 and Gln338 each act as charge relay system in the active site.

Belongs to the peptidase S41A family. As to quaternary structure, homodimer. Is cleaved by SpoIVB in vitro and in vivo but this cleavage does not appear to be necessary for CtpB activation. CtpB can also cleave itself in vivo.

The protein localises to the forespore intermembrane space. It catalyses the reaction The enzyme shows specific recognition of a C-terminal tripeptide, Xaa-Yaa-Zaa, in which Xaa is preferably Ala or Leu, Yaa is preferably Ala or Tyr, and Zaa is preferably Ala, but then cleaves at a variable distance from the C-terminus. A typical cleavage is -Ala-Ala-|-Arg-Ala-Ala-Lys-Glu-Asn-Tyr-Ala-Leu-Ala-Ala.. Activated by peptide binding to the PDZ domain. Involved in the signal transduction pathway leading to the proteolytic activation of the mother cell transcription factor pro-sigma-K during sporulation. The signaling serine protease CtpB triggers pro-sigma-K processing by cleaving the pre-processed regulatory protein SpoIVFA and is necessary for the proper timing of sigma-K activation. This Bacillus subtilis (strain 168) protein is Carboxy-terminal processing protease CtpB (ctpB).